We begin with the raw amino-acid sequence, 242 residues long: Copper transport protein B (242 aa).

2 helical membrane passes run 8-28 (ICLCFVISSPYVYLVSIACVL) and 86-106 (ITGPFSLLMSLIVIVLLTAGY). A disordered region spans residues 153 to 175 (ESATTNVPSSQTPNESSPLVAGR). Positions 154–169 (SATTNVPSSQTPNESS) are enriched in polar residues. The next 2 membrane-spanning stretches (helical) occupy residues 187-207 (IILAALYAVQVFYSFFIMLLF) and 210-230 (YNGFVMLAVAVGAFAGYLVFG).

Belongs to the copper transporter (Ctr) (TC 1.A.56) family. SLC31A subfamily.

The protein localises to the membrane. Functionally, transporter that is probably involved in the transport of copper, even if it does not act as a major copper transporter. The sequence is that of Copper transport protein B from Aspergillus fumigatus (strain ATCC MYA-4609 / CBS 101355 / FGSC A1100 / Af293) (Neosartorya fumigata).